Here is a 274-residue protein sequence, read N- to C-terminus: Large ribosomal subunit protein uL2cy (274 aa).

Disordered regions lie at residues 1-25 (MAIH…VKSN) and 223-274 (MNPV…RRSK). Residues 7 to 25 (KTSTPSTRNGTVDSQVKSN) show a composition bias toward polar residues.

This sequence belongs to the universal ribosomal protein uL2 family. As to quaternary structure, part of the 50S ribosomal subunit.

It localises to the plastid. The protein localises to the chloroplast. The polypeptide is Large ribosomal subunit protein uL2cy (rpl2-B) (Atropa belladonna (Belladonna)).